We begin with the raw amino-acid sequence, 698 residues long: Cytochrome c oxidase subunit 1 (698 aa).

Residues 65-85 (INYLYFSMVTGLSGAALATMI) traverse the membrane as a helical segment. Glutamate 88 is a Ca(2+) binding site. Fe(II)-heme a is bound at residue histidine 111. The next 8 membrane-spanning stretches (helical) occupy residues 113–133 (LIMVFFVVVPILFGGFANFLI), 147–167 (LNSIGFWIQPCGYILLAKIGF), 304–324 (ILILSVVFAGISTTISFTNLL), 349–369 (IFLTLRMLATITPVLGAAVIM), 395–415 (LFWFFGHPEVYVLIIPTFGFI), 434–454 (IWAIYVMAYMGYLVWGHHMYL), 468–488 (ITIMISMPATIKVVNWTLSLV), and 498–518 (FLFSMSFLLLFLVAGFTGMWL). Residue histidine 401 participates in Cu cation binding. A cross-link (1'-histidyl-3'-tyrosine (His-Tyr)) is located at residues 401-405 (HPEVY). Tyrosine 405 is an O2 binding site. Histidine 450 and histidine 451 together coordinate Cu cation. Mg(2+) is bound by residues histidine 528 and aspartate 529. The next 3 membrane-spanning stretches (helical) occupy residues 533-553 (VVAHFHIMLSGAAITGIFSGF), 574-594 (LIYYSGGQWVAFVPQFYLGFS), and 613-633 (MSTAGHFITLIGIMFFFLMIF). Histidine 536 lines the heme a3 pocket. Histidine 538 provides a ligand contact to Fe(II)-heme a.

The protein belongs to the heme-copper respiratory oxidase family. In terms of assembly, component of the cytochrome c oxidase (complex IV, CIV), a multisubunit enzyme composed of a catalytic core of 3 subunits and several supernumerary subunits. The complex exists as a monomer or a dimer and forms supercomplexes (SCs) in the inner mitochondrial membrane with ubiquinol-cytochrome c oxidoreductase (cytochrome b-c1 complex, complex III, CIII). Heme serves as cofactor. Requires Cu cation as cofactor.

The protein localises to the mitochondrion inner membrane. It carries out the reaction 4 Fe(II)-[cytochrome c] + O2 + 8 H(+)(in) = 4 Fe(III)-[cytochrome c] + 2 H2O + 4 H(+)(out). Its pathway is energy metabolism; oxidative phosphorylation. Functionally, component of the cytochrome c oxidase, the last enzyme in the mitochondrial electron transport chain which drives oxidative phosphorylation. The respiratory chain contains 3 multisubunit complexes succinate dehydrogenase (complex II, CII), ubiquinol-cytochrome c oxidoreductase (cytochrome b-c1 complex, complex III, CIII) and cytochrome c oxidase (complex IV, CIV), that cooperate to transfer electrons derived from NADH and succinate to molecular oxygen, creating an electrochemical gradient over the inner membrane that drives transmembrane transport and the ATP synthase. Cytochrome c oxidase is the component of the respiratory chain that catalyzes the reduction of oxygen to water. Electrons originating from reduced cytochrome c in the intermembrane space (IMS) are transferred via the dinuclear copper A center (CU(A)) of subunit 2 and heme A of subunit 1 to the active site in subunit 1, a binuclear center (BNC) formed by heme A3 and copper B (CU(B)). The BNC reduces molecular oxygen to 2 water molecules using 4 electrons from cytochrome c in the IMS and 4 protons from the mitochondrial matrix. The sequence is that of Cytochrome c oxidase subunit 1 (COI) from Tetrahymena pyriformis.